Consider the following 113-residue polypeptide: Putative pterin-4-alpha-carbinolamine dehydratase (113 aa).

The protein belongs to the pterin-4-alpha-carbinolamine dehydratase family.

It catalyses the reaction (4aS,6R)-4a-hydroxy-L-erythro-5,6,7,8-tetrahydrobiopterin = (6R)-L-erythro-6,7-dihydrobiopterin + H2O. This Nitrosococcus oceani (strain ATCC 19707 / BCRC 17464 / JCM 30415 / NCIMB 11848 / C-107) protein is Putative pterin-4-alpha-carbinolamine dehydratase.